The following is a 140-amino-acid chain: Nucleoside diphosphate kinase (140 aa).

Residues K11, F59, R87, T93, R104, and N114 each contribute to the ATP site. Catalysis depends on H117, which acts as the Pros-phosphohistidine intermediate.

The protein belongs to the NDK family. As to quaternary structure, homotetramer. The cofactor is Mg(2+).

The protein resides in the cytoplasm. It catalyses the reaction a 2'-deoxyribonucleoside 5'-diphosphate + ATP = a 2'-deoxyribonucleoside 5'-triphosphate + ADP. It carries out the reaction a ribonucleoside 5'-diphosphate + ATP = a ribonucleoside 5'-triphosphate + ADP. In terms of biological role, major role in the synthesis of nucleoside triphosphates other than ATP. The ATP gamma phosphate is transferred to the NDP beta phosphate via a ping-pong mechanism, using a phosphorylated active-site intermediate. This is Nucleoside diphosphate kinase from Francisella tularensis subsp. holarctica (strain LVS).